The primary structure comprises 428 residues: Inward rectifier potassium channel 2 (428 aa).

Over 1 to 81 the chain is Cytoplasmic; sequence MGSVRTNRYS…IFTTCVDIRW (81 aa). C76 carries the S-nitrosocysteine modification. Residues 82–106 form a helical membrane-spanning segment; the sequence is RWMLVIFCLAFVLSWLFFGCVFWLI. The Extracellular portion of the chain corresponds to 107 to 128; that stretch reads ALLHGDLDTSKVSKACVSEVNS. The helical; Pore-forming intramembrane region spans 129–140; it reads FTAAFLFSIETQ. An intramembrane region (pore-forming) is located at residues 141-147; sequence TTIGYGF. Positions 142–147 match the Selectivity filter motif; sequence TIGYGF. Topologically, residues 148–156 are extracellular; sequence RCVTDECPI. A helical transmembrane segment spans residues 157–178; sequence AVFMVVFQSIVGCIIDAFIIGA. Residues 179–428 are Cytoplasmic-facing; that stretch reads VMAKMAKPKK…PRPLRRESEI (250 aa). A polyphosphoinositide (PIP2)-binding region spans residues 181–208; that stretch reads AKMAKPKKRNETLVFSHNAVIAMRDGKL. The tract at residues 383-428 is disordered; the sequence is TSKEEEEDSENGVPESTSTDSPPGIDLHNQASVPLEPRPLRRESEI. Residues 426 to 428 carry the PDZ-binding motif; that stretch reads SEI.

The protein belongs to the inward rectifier-type potassium channel (TC 1.A.2.1) family. KCNJ2 subfamily. Homotetramer. Homomultimeric and heteromultimeric association with KCNJ4/Kir2.3. Can form heteromeric channels with Kir2.6/KCNJ18. Associates, via its PDZ-recognition domain, with a complex containing LIN7A, LIN7B, LIN7C, DLG1, CASK and APBA1. In terms of processing, S-nitrosylation increases the open probability and inward rectifying currents. Prominently expressed in the central nervous system. Also found in other excitable tissues such as heart and skeletal muscle.

Its subcellular location is the cell membrane. It localises to the sarcolemma. The protein resides in the T-tubule. The catalysed reaction is K(+)(in) = K(+)(out). Activated by phosphatidylinositol 4,5 biphosphate (PtdIns(4,5)P2). Inward rectifier potassium channels are characterized by a greater tendency to allow potassium to flow into the cell rather than out of it. Their voltage dependence is regulated by the concentration of extracellular potassium; as external potassium is raised, the voltage range of the channel opening shifts to more positive voltages. The inward rectification is mainly due to the blockage of outward current by internal magnesium. Can be blocked by extracellular barium and cesium. Probably participates in establishing action potential waveform and excitability of neuronal and muscle tissues. The chain is Inward rectifier potassium channel 2 (Kcnj2) from Mus musculus (Mouse).